Here is a 512-residue protein sequence, read N- to C-terminus: ATP synthase subunit alpha (512 aa).

169 to 176 (GDRQTGKT) contributes to the ATP binding site.

This sequence belongs to the ATPase alpha/beta chains family. F-type ATPases have 2 components, CF(1) - the catalytic core - and CF(0) - the membrane proton channel. CF(1) has five subunits: alpha(3), beta(3), gamma(1), delta(1), epsilon(1). CF(0) has three main subunits: a(1), b(2) and c(9-12). The alpha and beta chains form an alternating ring which encloses part of the gamma chain. CF(1) is attached to CF(0) by a central stalk formed by the gamma and epsilon chains, while a peripheral stalk is formed by the delta and b chains.

The protein localises to the cell inner membrane. The catalysed reaction is ATP + H2O + 4 H(+)(in) = ADP + phosphate + 5 H(+)(out). Functionally, produces ATP from ADP in the presence of a proton gradient across the membrane. The alpha chain is a regulatory subunit. In Dechloromonas aromatica (strain RCB), this protein is ATP synthase subunit alpha.